Reading from the N-terminus, the 348-residue chain is Ribonuclease H (348 aa).

Positions 54–65 (NTTSNYGSSTHA) are enriched in polar residues. Positions 54 to 81 (NTTSNYGSSTHAGGQVSKPHTTQKRVHR) are disordered. One can recognise an RNase H type-1 domain in the interval 184–346 (YNKSMNVYCD…ADFLAKKGAS (163 aa)). Mg(2+) contacts are provided by aspartate 193, glutamate 235, aspartate 264, and aspartate 338.

This sequence belongs to the RNase H family. Requires Mg(2+) as cofactor.

It carries out the reaction Endonucleolytic cleavage to 5'-phosphomonoester.. In terms of biological role, endonuclease that specifically degrades the RNA of RNA-DNA hybrids. This chain is Ribonuclease H (RNH1), found in Saccharomyces cerevisiae (strain ATCC 204508 / S288c) (Baker's yeast).